The following is a 289-amino-acid chain: Ribosomal protein L11 methyltransferase (289 aa).

T142, G163, D185, and N226 together coordinate S-adenosyl-L-methionine.

This sequence belongs to the methyltransferase superfamily. PrmA family.

The protein resides in the cytoplasm. The catalysed reaction is L-lysyl-[protein] + 3 S-adenosyl-L-methionine = N(6),N(6),N(6)-trimethyl-L-lysyl-[protein] + 3 S-adenosyl-L-homocysteine + 3 H(+). Methylates ribosomal protein L11. In Legionella pneumophila (strain Lens), this protein is Ribosomal protein L11 methyltransferase.